A 277-amino-acid polypeptide reads, in one-letter code: Putative gamma-glutamylcyclotransferase YkqA (277 aa).

8–11 (YGTL) provides a ligand contact to substrate. Glutamate 205 serves as the catalytic Proton acceptor.

The protein belongs to the gamma-glutamylcyclotransferase family.

In terms of biological role, putative gamma-glutamylcyclotransferase. The sequence is that of Putative gamma-glutamylcyclotransferase YkqA (ykqA) from Bacillus subtilis (strain 168).